The primary structure comprises 351 residues: UPF0764 protein C16orf89 homolog (351 aa).

The N-terminal stretch at 1–25 (MKSLKMLYPLFMLLVLSSKIDLSNQ) is a signal peptide.

It belongs to the UPF0764 family. In terms of assembly, homodimer.

Its subcellular location is the secreted. In Danio rerio (Zebrafish), this protein is UPF0764 protein C16orf89 homolog.